A 362-amino-acid polypeptide reads, in one-letter code: Meiotic recombination protein SPO11-1 (362 aa).

A Topo IIA-type catalytic domain is found at 8-142; the sequence is SESTNLLQRI…LNVVSVGNGL (135 aa). Y103 functions as the O-(5'-phospho-DNA)-tyrosine intermediate in the catalytic mechanism. Mg(2+) is bound by residues E189 and D241.

This sequence belongs to the TOP6A family. Heterotetramer of 2 SPO11 (SPO11-1 and/or SPO11-2) and 2 MTOPVIB chains. Interacts with MTOPVIB. May form a heterodimer with SPO11-2. Interacts with PRD1. Does not interact with TOP6B. Mg(2+) serves as cofactor. In terms of tissue distribution, expressed in shoots, young seedlings, flowers and reproductive tissues. Not found in roots or rosette leaves.

It is found in the nucleus. It carries out the reaction ATP-dependent breakage, passage and rejoining of double-stranded DNA.. Component of a topoisomerase 6 complex specifically required for meiotic recombination. Together with MTOPVIB, mediates DNA cleavage that forms the double-strand breaks (DSB) that initiate meiotic recombination. The complex promotes relaxation of negative and positive supercoiled DNA and DNA decatenation through cleavage and ligation cycles. The sequence is that of Meiotic recombination protein SPO11-1 from Arabidopsis thaliana (Mouse-ear cress).